Here is a 178-residue protein sequence, read N- to C-terminus: Probable chorismate pyruvate-lyase (178 aa).

Arg73, Leu111, and Glu163 together coordinate substrate.

This sequence belongs to the UbiC family.

The protein resides in the cytoplasm. The catalysed reaction is chorismate = 4-hydroxybenzoate + pyruvate. The protein operates within cofactor biosynthesis; ubiquinone biosynthesis. Its function is as follows. Removes the pyruvyl group from chorismate, with concomitant aromatization of the ring, to provide 4-hydroxybenzoate (4HB) for the ubiquinone pathway. The polypeptide is Probable chorismate pyruvate-lyase (Pseudomonas aeruginosa (strain ATCC 15692 / DSM 22644 / CIP 104116 / JCM 14847 / LMG 12228 / 1C / PRS 101 / PAO1)).